The chain runs to 304 residues: Insulin-like growth factor-binding protein 2 (304 aa).

Positions 1–34 are cleaved as a signal peptide; sequence MLPRLGGPALPLLLPSLLLLLLLGAGGCGPGVRA. The region spanning 36-118 is the IGFBP N-terminal domain; sequence VLFRCPPCTP…VTGAGTCEKR (83 aa). Disulfide bonds link cysteine 40/cysteine 68, cysteine 43/cysteine 70, cysteine 51/cysteine 71, cysteine 59/cysteine 74, cysteine 82/cysteine 95, cysteine 89/cysteine 115, cysteine 206/cysteine 240, cysteine 251/cysteine 262, and cysteine 264/cysteine 285. In terms of domain architecture, Thyroglobulin type-1 spans 203–285; sequence RTPCQQELDQ…APTIRGDPEC (83 aa). The short motif at 280 to 282 is the Cell attachment site element; sequence RGD.

In terms of assembly, interacts with IGF1. Interacts with IGF2. Interacts (via RGD motif) with integrin alpha5/ITGA5; this interaction induces cell migration, adhesion or apoptosis according to the context. Interacts with PTPRB; this interaction leads to PTPRB dimerization and inactivation. Post-translationally, cleaved by MMP9 leading to release of free IGF2 from IGFBP2-IGF2 complex, which contributes to enhance the motility and the growth of astrocytes. In terms of processing, O-glycosylated. In terms of tissue distribution, in adults, expressed in brain, testes, ovaries, and kidney. Expression in the adult liver is barely detectable.

It is found in the secreted. Functionally, multifunctional protein that plays a critical role in regulating the availability of IGFs such as IGF1 and IGF2 to their receptors and thereby regulates IGF-mediated cellular processes including proliferation, differentiation, and apoptosis in a cell-type specific manner. Functions coordinately with receptor protein tyrosine phosphatase beta/PTPRB and the IGF1 receptor to regulate IGF1-mediated signaling by stimulating the phosphorylation of PTEN leading to its inactivation and AKT1 activation. Plays a positive role in cell migration via interaction with integrin alpha5/ITGA5 through an RGD motif. Additionally, interaction with ITGA5/ITGB1 enhances the adhesion of endothelial progenitor cells to endothelial cells. Upon mitochondrial damage, facilitates apoptosis with ITGA5 of podocytes, and then activates the phosphorylation of focal adhesion kinase (FAK)-mediated mitochondrial injury. This chain is Insulin-like growth factor-binding protein 2 (Igfbp2), found in Rattus norvegicus (Rat).